We begin with the raw amino-acid sequence, 850 residues long: Rho guanine nucleotide exchange factor 33 (850 aa).

Basic and acidic residues-rich tracts occupy residues 1 to 13 (MEKS…ENEH) and 98 to 113 (EEMQ…EKRR). 2 disordered regions span residues 1–21 (MEKS…NPST) and 98–209 (EEMQ…DENL). The stretch at 54 to 128 (LEEKVKSCRC…KAKKAQKEEH (75 aa)) forms a coiled coil. Over residues 130–149 (AQAGPASAPAPGSAPTQGSP) the composition is skewed to low complexity. Over residues 164–175 (DFTNMLPSQNYE) the composition is skewed to polar residues. Residues 273-448 (KRQTVALELL…RVFISHYTLL (176 aa)) enclose the DH domain. 2 disordered regions span residues 504-550 (EMLQ…WELE) and 702-850 (AAQA…WGWW). Composition is skewed to low complexity over residues 510–520 (PSSSSSAPAVS) and 754–770 (APHG…GAPR). Position 766 is an omega-N-methylarginine (R766). The segment covering 773-783 (FPQQRSQSEKQ) has biased composition (polar residues). Residues 784-806 (TYLEEMHLEDATRFCPKEERESE) are compositionally biased toward basic and acidic residues. Residues 826–835 (SFRKLFKKKN) show a composition bias toward basic residues.

This Mus musculus (Mouse) protein is Rho guanine nucleotide exchange factor 33 (Arhgef33).